The primary structure comprises 411 residues: ATP phosphoribosyltransferase 1, chloroplastic (411 aa).

Residues 1-12 (MSLLLPTNLQQY) are compositionally biased toward polar residues. Positions 1-27 (MSLLLPTNLQQYPSSSSFPSSTPILSP) are disordered. The N-terminal 49 residues, 1–49 (MSLLLPTNLQQYPSSSSFPSSTPILSPPPSTAFSVIVPRRRCLRLVTSC), are a transit peptide targeting the chloroplast. A compositionally biased stretch (low complexity) spans 13–24 (PSSSSFPSSTPI). N-acetylvaline is present on V50.

The protein belongs to the ATP phosphoribosyltransferase family. Long subfamily. Requires Mg(2+) as cofactor. In terms of tissue distribution, expressed in leaves and at lower levels in roots (at protein level).

Its subcellular location is the plastid. The protein localises to the chloroplast. The enzyme catalyses 1-(5-phospho-beta-D-ribosyl)-ATP + diphosphate = 5-phospho-alpha-D-ribose 1-diphosphate + ATP. Its pathway is amino-acid biosynthesis; L-histidine biosynthesis; L-histidine from 5-phospho-alpha-D-ribose 1-diphosphate: step 1/9. Its activity is regulated as follows. Feedback inhibited by L-histidine. In terms of biological role, catalyzes the condensation of ATP and 5-phosphoribose 1-diphosphate to form N'-(5'-phosphoribosyl)-ATP (PR-ATP). This chain is ATP phosphoribosyltransferase 1, chloroplastic (HISN1A), found in Arabidopsis thaliana (Mouse-ear cress).